A 135-amino-acid chain; its full sequence is Protein E6 (135 aa).

2 zinc fingers span residues 11–47 (CVFCYCVLGKVEARRCYDKKIRTVVRGGLRCAVCTAC) and 83–119 (CMYCGGILTRDEKDRHRYFEELYVIFRNQVLGRCYTC).

The protein belongs to the papillomaviridae E6 protein family. Forms homodimers. Interacts with ubiquitin-protein ligase UBE3A/E6-AP; this interaction stimulates UBE3A ubiquitin activity. Interacts with host BAK1.

The protein resides in the host cytoplasm. Its subcellular location is the host nucleus. In terms of biological role, plays a major role in the induction and maintenance of cellular transformation. E6 associates with host UBE3A/E6-AP ubiquitin-protein ligase and modulates its activity. Protects host keratinocytes from apoptosis by mediating the degradation of host BAK1. May also inhibit host immune response. The sequence is that of Protein E6 from Odocoileus virginianus papillomavirus 1 (DPV).